Consider the following 129-residue polypeptide: Gene 58 protein (129 aa).

The tract at residues G87–S129 is disordered. Positions E106–S115 are enriched in low complexity.

This Mycobacterium (Mycobacteriophage D29) protein is Gene 58 protein (58).